We begin with the raw amino-acid sequence, 83 residues long: Small ribosomal subunit protein eS21 (83 aa).

It belongs to the eukaryotic ribosomal protein eS21 family. As to quaternary structure, component of the 40S small ribosomal subunit. Interacts with sta.

The protein localises to the cytoplasm. Its subcellular location is the cytosol. It is found in the rough endoplasmic reticulum. Functionally, may be an associated component of the ribosome rather than a core structural subunit. May act as a translation initiation factor. Has a role in regulation of cell proliferation in the hematopoietic organs and the imaginal disks of larva. In Drosophila simulans (Fruit fly), this protein is Small ribosomal subunit protein eS21 (RpS21).